The following is a 288-amino-acid chain: uncharacterized protein (288 aa).

The N-terminal stretch at 1 to 27 is a signal peptide; the sequence is MKFEFRTLVLISLAVVVVLSGCSQSPS. A disordered region spans residues 144–167; it reads GESGEAGGAGEQLPASDQASGEEP.

This is an uncharacterized protein from Archaeoglobus fulgidus (strain ATCC 49558 / DSM 4304 / JCM 9628 / NBRC 100126 / VC-16).